The chain runs to 396 residues: Elongation factor Tu (396 aa).

One can recognise a tr-type G domain in the interval 10 to 205 (KPHVNIGTIG…ACDESIPDPE (196 aa)). Residues 19-26 (GHVDHGKT) form a G1 region. 19-26 (GHVDHGKT) contacts GTP. Mg(2+) is bound at residue Thr26. Positions 62 to 66 (GITIN) are G2. The G3 stretch occupies residues 83-86 (DAPG). GTP-binding positions include 83–87 (DAPGH) and 138–141 (NKCD). The segment at 138 to 141 (NKCD) is G4. The segment at 175–177 (SAL) is G5.

Belongs to the TRAFAC class translation factor GTPase superfamily. Classic translation factor GTPase family. EF-Tu/EF-1A subfamily. As to quaternary structure, monomer.

Its subcellular location is the cytoplasm. It carries out the reaction GTP + H2O = GDP + phosphate + H(+). Its function is as follows. GTP hydrolase that promotes the GTP-dependent binding of aminoacyl-tRNA to the A-site of ribosomes during protein biosynthesis. This is Elongation factor Tu from Corynebacterium jeikeium (strain K411).